The primary structure comprises 406 residues: Protein phosphatase 2C (406 aa).

One can recognise a PPM-type phosphatase domain in the interval 23-274 (RCGSNCVNGY…DNISCMIVQF (252 aa)). Asp55, Gly56, Asp221, and Asp265 together coordinate Mn(2+).

Belongs to the PP2C family. Monomer. Requires Mg(2+) as cofactor. It depends on Mn(2+) as a cofactor.

The enzyme catalyses O-phospho-L-seryl-[protein] + H2O = L-seryl-[protein] + phosphate. The catalysed reaction is O-phospho-L-threonyl-[protein] + H2O = L-threonyl-[protein] + phosphate. Enzyme with a broad specificity. This Leishmania chagasi protein is Protein phosphatase 2C.